Consider the following 370-residue polypeptide: GTPase Obg (370 aa).

Residues 1–159 (MKFIDEARIE…RMLKLELKVL (159 aa)) enclose the Obg domain. Positions 128-147 (LHFKSSTNRAPRQKTDGKPG) are disordered. Residues 160 to 334 (ADVGLLGMPN…LCYAIYDYLS (175 aa)) enclose the OBG-type G domain. Residues 166–173 (GMPNAGKS), 191–195 (FTTLA), 213–216 (DIPG), 284–287 (NKLD), and 315–317 (SAL) each bind GTP. Positions 173 and 193 each coordinate Mg(2+).

The protein belongs to the TRAFAC class OBG-HflX-like GTPase superfamily. OBG GTPase family. In terms of assembly, monomer. Mg(2+) serves as cofactor.

The protein resides in the cytoplasm. Functionally, an essential GTPase which binds GTP, GDP and possibly (p)ppGpp with moderate affinity, with high nucleotide exchange rates and a fairly low GTP hydrolysis rate. Plays a role in control of the cell cycle, stress response, ribosome biogenesis and in those bacteria that undergo differentiation, in morphogenesis control. This is GTPase Obg from Burkholderia cenocepacia (strain ATCC BAA-245 / DSM 16553 / LMG 16656 / NCTC 13227 / J2315 / CF5610) (Burkholderia cepacia (strain J2315)).